We begin with the raw amino-acid sequence, 81 residues long: Photosystem I iron-sulfur center (81 aa).

2 consecutive 4Fe-4S ferredoxin-type domains span residues 2 to 31 and 39 to 68; these read AHSV…MVPW and IASA…VRVY. Residues cysteine 11, cysteine 14, cysteine 17, cysteine 21, cysteine 48, cysteine 51, cysteine 54, and cysteine 58 each coordinate [4Fe-4S] cluster.

As to quaternary structure, the eukaryotic PSI reaction center is composed of at least 11 subunits. Requires [4Fe-4S] cluster as cofactor.

Its subcellular location is the plastid. The protein resides in the chloroplast thylakoid membrane. The enzyme catalyses reduced [plastocyanin] + hnu + oxidized [2Fe-2S]-[ferredoxin] = oxidized [plastocyanin] + reduced [2Fe-2S]-[ferredoxin]. Its function is as follows. Apoprotein for the two 4Fe-4S centers FA and FB of photosystem I (PSI); essential for photochemical activity. FB is the terminal electron acceptor of PSI, donating electrons to ferredoxin. The C-terminus interacts with PsaA/B/D and helps assemble the protein into the PSI complex. Required for binding of PsaD and PsaE to PSI. PSI is a plastocyanin-ferredoxin oxidoreductase, converting photonic excitation into a charge separation, which transfers an electron from the donor P700 chlorophyll pair to the spectroscopically characterized acceptors A0, A1, FX, FA and FB in turn. The polypeptide is Photosystem I iron-sulfur center (Gnetum parvifolium (Small-leaved jointfir)).